Consider the following 120-residue polypeptide: Large ribosomal subunit protein P3 (120 aa).

A disordered region spans residues 83–120 (GGGGAAASGGAAAEAPKEEKKEEEKEESDDDMGFSLFD).

The protein belongs to the eukaryotic ribosomal protein P1/P2 family. Phosphorylated.

Its function is as follows. Plays an important role in the elongation step of protein synthesis. The polypeptide is Large ribosomal subunit protein P3 (RPP3A) (Zea mays (Maize)).